A 130-amino-acid polypeptide reads, in one-letter code: Small ribosomal subunit protein uS9 (130 aa).

This sequence belongs to the universal ribosomal protein uS9 family.

This is Small ribosomal subunit protein uS9 from Paraburkholderia phytofirmans (strain DSM 17436 / LMG 22146 / PsJN) (Burkholderia phytofirmans).